Reading from the N-terminus, the 245-residue chain is 1-(5-phosphoribosyl)-5-[(5-phosphoribosylamino)methylideneamino] imidazole-4-carboxamide isomerase (245 aa).

D8 acts as the Proton acceptor in catalysis. Catalysis depends on D129, which acts as the Proton donor.

It belongs to the HisA/HisF family.

The protein localises to the cytoplasm. It carries out the reaction 1-(5-phospho-beta-D-ribosyl)-5-[(5-phospho-beta-D-ribosylamino)methylideneamino]imidazole-4-carboxamide = 5-[(5-phospho-1-deoxy-D-ribulos-1-ylimino)methylamino]-1-(5-phospho-beta-D-ribosyl)imidazole-4-carboxamide. It participates in amino-acid biosynthesis; L-histidine biosynthesis; L-histidine from 5-phospho-alpha-D-ribose 1-diphosphate: step 4/9. This chain is 1-(5-phosphoribosyl)-5-[(5-phosphoribosylamino)methylideneamino] imidazole-4-carboxamide isomerase, found in Rhodopseudomonas palustris (strain BisB5).